Reading from the N-terminus, the 473-residue chain is Beta-secretase 1 (473 aa).

The N-terminal stretch at 1 to 21 (MAPALPWLLLWVGSGVLPVHG) is a signal peptide. Positions 22–45 (TQDGIRLPLRSGLAGAPLGLRLPR) are excised as a propeptide. At 22 to 429 (TQDGIRLPLR…PQTDESTLMT (408 aa)) the chain is on the extracellular side. The region spanning 72–388 (YYVEMTVGSP…DRARKRIGFA (317 aa)) is the Peptidase A1 domain. Residue Asp90 is part of the active site. Residue Lys123 is modified to N6-acetyllysine. N-linked (GlcNAc...) asparagine glycosylation is found at Asn150, Asn169, and Asn195. 3 disulfides stabilise this stretch: Cys188/Cys392, Cys250/Cys415, and Cys302/Cys352. N6-acetyllysine occurs at positions 247, 251, and 257. Asp261 is a catalytic residue. N6-acetyllysine is present on residues Lys271, Lys272, and Lys279. Asn326 carries an N-linked (GlcNAc...) asparagine glycan. A helical transmembrane segment spans residues 430–450 (IAYVMAAICALFMLPLCLMVC). Residues Cys446, Cys450, Cys454, and Cys457 are each lipidated (S-palmitoyl cysteine). Over 451–473 (QWRCLRCLRHQHDDFADDISLLK) the chain is Cytoplasmic. Residues 451-473 (QWRCLRCLRHQHDDFADDISLLK) are interaction with RTN3. A DXXLL motif is present at residues 468–472 (DISLL). At Ser470 the chain carries Phosphoserine. Residue Lys473 forms a Glycyl lysine isopeptide (Lys-Gly) (interchain with G-Cter in ubiquitin) linkage.

The protein belongs to the peptidase A1 family. In terms of assembly, monomer. Interacts (via DXXLL motif) with GGA1, GGA2 and GGA3 (via their VHS domain); the interaction highly increases when BACE1 is phosphorylated at Ser-470. Interacts with RTN1; RTN2; RTN3 and RTN4; the interaction leads to inhibition of amyloid precursor protein processing. Interacts with SNX6. Interacts with PCSK9. Interacts with NAT8 and NAT8B. Interacts with BIN1. Interacts (via extracellular domain) with ADAM10 (via extracellular domain). Interacts with SORL1; this interaction may affect binding with APP and hence reduce APP cleavage. Interacts with NRDC AND NRG1. Palmitoylation mediates lipid raft localization. In terms of processing, acetylated in the endoplasmic reticulum at Lys-123, Lys-247, Lys-251, Lys-257, Lys-271, Lys-272, and Lys-279. Acetylation by NAT8 and NAT8B is transient and deacetylation probably occurs in the Golgi. Acetylation regulates the maturation, the transport to the plasma membrane, the stability and the expression of the protein. Post-translationally, ubiquitinated at Lys-473, ubiquitination leads to lysosomal degradation. Monoubiquitinated and 'Lys-63'-linked polyubitinated. Deubiquitnated by USP8; inhibits lysosomal degradation. Phosphorylation at Ser-470 is required for interaction with GGA1 and retrograded transport from endosomal compartments to the trans-Golgi network. Non-phosphorylated BACE1 enters a direct recycling route to the cell surface. In terms of processing, N-Glycosylated. Addition of a bisecting N-acetylglucosamine by MGAT3 blocks lysosomal targeting, further degradation and is required for maintaining stability under stress conditions.

It localises to the cell membrane. It is found in the golgi apparatus. The protein localises to the trans-Golgi network. The protein resides in the endoplasmic reticulum. Its subcellular location is the endosome. It localises to the cell surface. It is found in the cytoplasmic vesicle membrane. The protein localises to the membrane raft. The protein resides in the lysosome. Its subcellular location is the late endosome. It localises to the early endosome. It is found in the recycling endosome. The protein localises to the cell projection. The protein resides in the axon. Its subcellular location is the dendrite. It carries out the reaction Broad endopeptidase specificity. Cleaves Glu-Val-Asn-Leu-|-Asp-Ala-Glu-Phe in the Swedish variant of Alzheimer's amyloid precursor protein.. Its activity is regulated as follows. Inhibited by RTN3 and RTN4. Responsible for the proteolytic processing of the amyloid precursor protein (APP). Cleaves at the N-terminus of the A-beta peptide sequence, between residues 671 and 672 of APP, leads to the generation and extracellular release of beta-cleaved soluble APP, and a corresponding cell-associated C-terminal fragment which is later released by gamma-secretase. Cleaves CHL1. In Cavia porcellus (Guinea pig), this protein is Beta-secretase 1 (BACE1).